Reading from the N-terminus, the 201-residue chain is Eukaryotic translation initiation factor 4E-5 (201 aa).

Cysteines 122 and 126 form a disulfide.

This sequence belongs to the eukaryotic initiation factor 4E family. EIF4F is a multi-subunit complex, the composition of which varies with external and internal environmental conditions. It is composed of at least eIF4A, eIF4E and eIF4G. eIF4E is also known to interact with other partners. Enriched in the germline.

Its function is as follows. Recognizes and binds the 7-methylguanosine-containing mRNA cap during an early step in the initiation of protein synthesis and facilitates ribosome binding by inducing the unwinding of the mRNAs secondary structures. All 5 eIF4E proteins bind monomethyl cap structures. Only ife-1, ife-2 and ife-5 bind trimethyl cap structures which result from trans-splicing. Translation of trimethyl cap structure mRNAs may be regulated by intracellular redox state; disulfide bonds change the width and depth of the cap-binding cavity determining selectivity to mRNA caps. The protein is Eukaryotic translation initiation factor 4E-5 (ife-5) of Caenorhabditis elegans.